We begin with the raw amino-acid sequence, 293 residues long: MKSTFLWTACVTPFNCNGDSIDYSSLQRLLTMQVKAENGVVLLGSTGESLSLTDSEKRTLVEFVCKLKLNTEIIIGVPGVNLYQTLEWLDFCKGMPIHGYLMTTPIYAKPGIMGQTLWFEKLLEKAHVPVMFYNIPSRAGINLHAETVRNLSSHEKFWAIKDSSGTVDTLAQYKKVAPNIEVFCGDDNMISDMAAYGAAGLVSVASNVWPYVAHEYVKKCLNGRNPQADIWQQACEALFIASNPIPTKALLHDIGLIEHQTVRLPLSTEDLPSVEKLRQVNKMILGWKELATL.

Threonine 46 is a binding site for pyruvate. The active-site Proton donor/acceptor is the tyrosine 133. The Schiff-base intermediate with substrate role is filled by lysine 161. Residue valine 202 participates in pyruvate binding.

The protein belongs to the DapA family. As to quaternary structure, homotetramer; dimer of dimers.

The protein localises to the cytoplasm. The enzyme catalyses L-aspartate 4-semialdehyde + pyruvate = (2S,4S)-4-hydroxy-2,3,4,5-tetrahydrodipicolinate + H2O + H(+). It participates in amino-acid biosynthesis; L-lysine biosynthesis via DAP pathway; (S)-tetrahydrodipicolinate from L-aspartate: step 3/4. Catalyzes the condensation of (S)-aspartate-beta-semialdehyde [(S)-ASA] and pyruvate to 4-hydroxy-tetrahydrodipicolinate (HTPA). This chain is 4-hydroxy-tetrahydrodipicolinate synthase, found in Wolbachia pipientis wMel.